The chain runs to 331 residues: Mitochondrial carrier protein CoAc1 (331 aa).

The next 6 helical transmembrane spans lie at 16–36 (LVDT…AGAI), 79–99 (FYKG…LHYM), 123–143 (LVAG…LDLA), 193–213 (GIGP…YIYE), 231–251 (LPCG…LDVV), and 292–312 (FAGL…GFTV). Solcar repeat units follow at residues 21 to 107 (PVLA…YRDW), 117 to 218 (SGPI…LKRH), and 225 to 319 (NSVR…MKSW).

The protein belongs to the mitochondrial carrier (TC 2.A.29) family. In terms of tissue distribution, expressed throughout the plant.

It localises to the mitochondrion inner membrane. Required for the accumulation of coenzyme A in the mitochondrial matrix. The sequence is that of Mitochondrial carrier protein CoAc1 from Arabidopsis thaliana (Mouse-ear cress).